A 168-amino-acid polypeptide reads, in one-letter code: Photosystem I assembly protein Ycf3 (168 aa).

TPR repeat units lie at residues 35–68 (AFTY…EIDP), 72–105 (SYIL…NPFL), and 120–153 (GEQA…TPGN).

The protein belongs to the Ycf3 family.

The protein resides in the plastid. Its subcellular location is the chloroplast thylakoid membrane. In terms of biological role, essential for the assembly of the photosystem I (PSI) complex. May act as a chaperone-like factor to guide the assembly of the PSI subunits. This Coffea arabica (Arabian coffee) protein is Photosystem I assembly protein Ycf3.